We begin with the raw amino-acid sequence, 337 residues long: Probable allantoicase 1 (337 aa).

Belongs to the allantoicase family.

It catalyses the reaction allantoate + H2O = (S)-ureidoglycolate + urea. It participates in nitrogen metabolism; (S)-allantoin degradation; (S)-ureidoglycolate from allantoate (aminidohydrolase route): step 1/1. The protein is Probable allantoicase 1 of Burkholderia mallei (strain ATCC 23344).